A 467-amino-acid chain; its full sequence is Colanic acid biosynthesis protein WcaM (467 aa).

It functions in the pathway slime biogenesis; slime polysaccharide biosynthesis. In Salmonella typhimurium (strain LT2 / SGSC1412 / ATCC 700720), this protein is Colanic acid biosynthesis protein WcaM (wcaM).